We begin with the raw amino-acid sequence, 357 residues long: Sulfate/thiosulfate import ATP-binding protein CysA (357 aa).

The region spanning 3–237 (ITIQNLNKHF…PENAFVTEFL (235 aa)) is the ABC transporter domain. ATP is bound at residue 35-42 (GPSGCGKT).

This sequence belongs to the ABC transporter superfamily. Sulfate/tungstate importer (TC 3.A.1.6) family. As to quaternary structure, the complex is composed of two ATP-binding proteins (CysA), two transmembrane proteins (CysT and CysW) and a solute-binding protein (CysP).

The protein localises to the cell inner membrane. It catalyses the reaction sulfate(out) + ATP + H2O = sulfate(in) + ADP + phosphate + H(+). It carries out the reaction thiosulfate(out) + ATP + H2O = thiosulfate(in) + ADP + phosphate + H(+). In terms of biological role, part of the ABC transporter complex CysAWTP involved in sulfate/thiosulfate import. Responsible for energy coupling to the transport system. In Neisseria meningitidis serogroup A / serotype 4A (strain DSM 15465 / Z2491), this protein is Sulfate/thiosulfate import ATP-binding protein CysA.